Consider the following 61-residue polypeptide: Rubredoxin 3 (61 aa).

Residues 1–53 (MSSYRCPVCEYVYDESKGAPREGFPAGTPWDAVPDDWCCPDCGVREKLDFEPM) form the Rubredoxin-like domain. 4 residues coordinate Fe cation: Cys-6, Cys-9, Cys-39, and Cys-42.

It belongs to the rubredoxin family. Fe(3+) serves as cofactor.

Its function is as follows. Involved in the hydrocarbon hydroxylating system, which transfers electrons from NADH to rubredoxin reductase and then through rubredoxin to alkane 1 monooxygenase. This chain is Rubredoxin 3 (rubA3), found in Rhodococcus erythropolis (Arthrobacter picolinophilus).